The following is a 123-amino-acid chain: PTS system glucitol/sorbitol-specific EIIA component (123 aa).

One can recognise a PTS EIIA type-5 domain in the interval 3–116; the sequence is VIYQTTITRI…PDDIAPGSVL (114 aa). The active-site Tele-phosphohistidine intermediate is histidine 43. Histidine 43 is subject to Phosphohistidine; by HPr.

It is found in the cytoplasm. Its function is as follows. The phosphoenolpyruvate-dependent sugar phosphotransferase system (sugar PTS), a major carbohydrate active transport system, catalyzes the phosphorylation of incoming sugar substrates concomitantly with their translocation across the cell membrane. The enzyme II complex composed of SrlA, SrlB and SrlE is involved in glucitol/sorbitol transport. It can also use D-mannitol. The chain is PTS system glucitol/sorbitol-specific EIIA component (srlB) from Escherichia coli (strain K12).